Here is a 796-residue protein sequence, read N- to C-terminus: MSVDTQQAPPEPTDEELAGLDAHWRAANYLAVGQIYLMANPLLTDPLRPEHVKPRLLGHWGTSPGLNLVHTHLNRVIKARDLDALCVWGPGHGGPAVLANAWLEGSYTETYPDITRDAAGMARLFKQFSFPGGVPSHVAPETPGSIHEGGELGYALSHAYGAAFDHPDLVVACVIGDGEAETGPLATSWHSNKFLDPVHDGAVLPILHLNGYKIANPTVLARLPETELDELLRGYGHDPVHVTGDDPAAVHRATARAMDTALDRIAAIQRAAREEGATGRPRWPMIVLRTPKGWTGPAEVDGLPVENTWRAHQVPLSAVRTNPEHLAQLERWLRSYRPEELFDDAGAPRPAVLAAIPEGPRRLGATPYANGGLLLRELPVPPLEKYAVPVGEPGASTHEPTRVLGDLLRDVMAATTDRRDFRLVGPDETASNRLQAVYAATGKAWQERTLPVDEDLDRHGRVMEILSEHTCQGWLEGYLLTGRHGLFSCYEAFVHIVDSMVNQHVKWLRVTRRLPWRAPIASLNYLLTSHVWRQDHNGFSHQEPGFVDHILNKSPEAVRVYLPPDANTLLSVADHALRSRDYVNVIVAGKQPCFDWLTMDQAKAHCARGAGIWDWAGTEDGSREPDVVLACAGDVPTLEILAAAQLIRHHLPELAVRVVNVVDIARLLPSGEHPHGMSDFEYDGLFTADKPVIFAYHGYPWLIHRLAYRRTGHAHLHVRGYKEIGTTTTPFDMVVGNDLDRYRLVMDVIDRVPGLAVRAAAVRQRMEDARQRHHDWIREHGVDLPEVADWTWEAPR.

Belongs to the XFP family. The cofactor is thiamine diphosphate.

This chain is Probable phosphoketolase, found in Streptomyces coelicolor (strain ATCC BAA-471 / A3(2) / M145).